Here is a 252-residue protein sequence, read N- to C-terminus: 3-dehydroquinate dehydratase (252 aa).

Residues Ser21, 46 to 48 (EWR), and Arg82 each bind 3-dehydroquinate. The active-site Proton donor/acceptor is the His143. Lys170 serves as the catalytic Schiff-base intermediate with substrate. Residues Arg213, Ser232, and Gln236 each coordinate 3-dehydroquinate.

The protein belongs to the type-I 3-dehydroquinase family. In terms of assembly, homodimer.

It catalyses the reaction 3-dehydroquinate = 3-dehydroshikimate + H2O. It participates in metabolic intermediate biosynthesis; chorismate biosynthesis; chorismate from D-erythrose 4-phosphate and phosphoenolpyruvate: step 3/7. Inhibited by (2R)-2-methyl-3-dehydroquinic acid. In terms of biological role, involved in the third step of the chorismate pathway, which leads to the biosynthesis of aromatic amino acids. Catalyzes the cis-dehydration of 3-dehydroquinate (DHQ) and introduces the first double bond of the aromatic ring to yield 3-dehydroshikimate. The reaction involves the formation of an imine intermediate between the keto group of 3-dehydroquinate and the epsilon-amino group of a Lys-170 at the active site. In Salmonella typhimurium (strain LT2 / SGSC1412 / ATCC 700720), this protein is 3-dehydroquinate dehydratase.